The chain runs to 146 residues: Large ribosomal subunit protein uL15 (146 aa).

A disordered region spans residues 1–54 (MKLHELQPAAGSRKAPKRVGRGTGSGLGRNAGKGEKGQNARSGGGVRPGFEGGQ). 2 stretches are compositionally biased toward gly residues: residues 21 to 31 (RGTGSGLGRNA) and 42 to 52 (SGGGVRPGFEG).

This sequence belongs to the universal ribosomal protein uL15 family. As to quaternary structure, part of the 50S ribosomal subunit.

In terms of biological role, binds to the 23S rRNA. In Clostridium botulinum (strain Alaska E43 / Type E3), this protein is Large ribosomal subunit protein uL15.